The primary structure comprises 201 residues: Translation initiation factor IF-3 (201 aa).

This sequence belongs to the IF-3 family. In terms of assembly, monomer.

Its subcellular location is the cytoplasm. In terms of biological role, IF-3 binds to the 30S ribosomal subunit and shifts the equilibrium between 70S ribosomes and their 50S and 30S subunits in favor of the free subunits, thus enhancing the availability of 30S subunits on which protein synthesis initiation begins. This chain is Translation initiation factor IF-3, found in Mycoplasma pneumoniae (strain ATCC 29342 / M129 / Subtype 1) (Mycoplasmoides pneumoniae).